Reading from the N-terminus, the 1017-residue chain is Rho-GTPase-activating protein LRG1 (1017 aa).

An N-acetylmethionine modification is found at M1. LIM zinc-binding domains lie at 28–88 (CARC…LCQY) and 98–148 (CHVC…CKYH). The LIM zinc-binding 3; truncated domain maps to 155–184 (KRCKGCEFPISDQYIEFPKGEEIHCWHPEC). The LIM zinc-binding 4 domain maps to 419–474 (CAGCNKYIQEECIQFYEHRWHIACFTCSSCHKNINPRSLTDPTFNKEKKKILCSHC). S562 is subject to Phosphoserine. The interval 570–602 (TDLNDPTKQGDSKNLVIQTDDPSSSQQVSTREN) is disordered. The span at 584–602 (LVIQTDDPSSSQQVSTREN) shows a compositional bias: polar residues. In terms of domain architecture, Rho-GAP spans 730–953 (APLDVLCEKW…YLITHNEEMA (224 aa)).

In terms of assembly, interacts with CDC42, RHO1 and RHO2.

It is found in the cytoplasm. The protein localises to the bud. Its subcellular location is the bud neck. In terms of biological role, acts in signal transduction. Activates CDC42, RHO1 and RHO2. Negatively regulates 1,3-beta-glucan synthesis. May be responsible for the down-regulation of CDC42 during mating. The chain is Rho-GTPase-activating protein LRG1 (LRG1) from Saccharomyces cerevisiae (strain ATCC 204508 / S288c) (Baker's yeast).